The primary structure comprises 1393 residues: DNA-directed RNA polymerase subunit beta (1393 aa).

The protein belongs to the RNA polymerase beta chain family. The RNAP catalytic core consists of 2 alpha, 1 beta, 1 beta' and 1 omega subunit. When a sigma factor is associated with the core the holoenzyme is formed, which can initiate transcription.

It catalyses the reaction RNA(n) + a ribonucleoside 5'-triphosphate = RNA(n+1) + diphosphate. In terms of biological role, DNA-dependent RNA polymerase catalyzes the transcription of DNA into RNA using the four ribonucleoside triphosphates as substrates. This chain is DNA-directed RNA polymerase subunit beta, found in Rhodospirillum rubrum (strain ATCC 11170 / ATH 1.1.1 / DSM 467 / LMG 4362 / NCIMB 8255 / S1).